The sequence spans 192 residues: Molybdenum cofactor guanylyltransferase (192 aa).

GTP is bound by residues 10 to 12 (LAG), Lys-23, Asn-51, Asp-69, and Asp-99. Asp-99 contacts Mg(2+).

It belongs to the MobA family. Monomer. Mg(2+) serves as cofactor.

The protein resides in the cytoplasm. It carries out the reaction Mo-molybdopterin + GTP + H(+) = Mo-molybdopterin guanine dinucleotide + diphosphate. In terms of biological role, transfers a GMP moiety from GTP to Mo-molybdopterin (Mo-MPT) cofactor (Moco or molybdenum cofactor) to form Mo-molybdopterin guanine dinucleotide (Mo-MGD) cofactor. This is Molybdenum cofactor guanylyltransferase from Haemophilus influenzae (strain 86-028NP).